A 243-amino-acid polypeptide reads, in one-letter code: Carboxy-S-adenosyl-L-methionine synthase (243 aa).

S-adenosyl-L-methionine-binding positions include Tyr-40, 65-67, 90-91, 118-119, Asn-133, and Arg-200; these read GCS, DN, and DI.

It belongs to the class I-like SAM-binding methyltransferase superfamily. Cx-SAM synthase family. In terms of assembly, homodimer.

It carries out the reaction prephenate + S-adenosyl-L-methionine = carboxy-S-adenosyl-L-methionine + 3-phenylpyruvate + H2O. Its function is as follows. Catalyzes the conversion of S-adenosyl-L-methionine (SAM) to carboxy-S-adenosyl-L-methionine (Cx-SAM). The sequence is that of Carboxy-S-adenosyl-L-methionine synthase from Shewanella oneidensis (strain ATCC 700550 / JCM 31522 / CIP 106686 / LMG 19005 / NCIMB 14063 / MR-1).